The sequence spans 428 residues: Histidine--tRNA ligase (428 aa).

This sequence belongs to the class-II aminoacyl-tRNA synthetase family. Homodimer.

The protein localises to the cytoplasm. It catalyses the reaction tRNA(His) + L-histidine + ATP = L-histidyl-tRNA(His) + AMP + diphosphate + H(+). This chain is Histidine--tRNA ligase, found in Chlamydia trachomatis serovar A (strain ATCC VR-571B / DSM 19440 / HAR-13).